The sequence spans 235 residues: Sugar fermentation stimulation protein homolog (235 aa).

It belongs to the SfsA family.

This is Sugar fermentation stimulation protein homolog from Allorhizobium ampelinum (strain ATCC BAA-846 / DSM 112012 / S4) (Agrobacterium vitis (strain S4)).